The sequence spans 1237 residues: Phosphorylase b kinase regulatory subunit alpha, skeletal muscle isoform (1237 aa).

A phosphoserine mark is found at S629, S729, S735, and S758. The calmodulin-binding stretch occupies residues 810–840 (LTELYGKVGKIRHWGLIRYISGILRKKVEAL). The residue at position 972 (S972) is a Phosphoserine; by autocatalysis. A Phosphoserine modification is found at S981. Residues S985 and S1007 each carry the phosphoserine; by autocatalysis modification. S1018 is modified (phosphoserine; by PKA). Residues S1020, S1023, and S1030 each carry the phosphoserine modification. The disordered stretch occupies residues 1021–1069 (TESQPNGGHSLGADLMSPSFLSPGTSVTPSSGSFPGHHTSKDSRQGQWQ). Residues 1042–1056 (SPGTSVTPSSGSFPG) show a composition bias toward low complexity. A calmodulin-binding region spans residues 1060–1100 (SKDSRQGQWQRRRRLDGALNRVPIGFYQKVWKVLQKCHGLS). The residue at position 1127 (S1127) is a Phosphoserine. Residue C1234 is the site of S-farnesyl cysteine attachment.

It belongs to the phosphorylase b kinase regulatory chain family. As to quaternary structure, hexadecamer of 4 heterotetramers, each composed of alpha, beta, gamma, and delta subunits. Alpha (PHKA1 or PHKA2) and beta (PHKB) are regulatory subunits, gamma (PHKG1 or PHKG2) is the catalytic subunit, and delta is calmodulin. In terms of processing, phosphorylation of Ser-1018 by PKA stimulates the dephosphorylation of the beta subunit and, thus, reverses the initial stimulation of PHK by the faster beta-subunit phosphorylation by PKA, that occurs in muscle in response to adrenaline. Post-translationally, cys-1234 is farnesylated, but the C-terminal tripeptide is not removed and the cysteine carboxyl is not methylated. In terms of tissue distribution, isoform 1 predominates in muscle, heart, brain and testis. Isoforms 1 and 2 are expressed in similar quantities in the other tissues. Isoform 3 is highly expressed in slow muscle and heart.

It localises to the cell membrane. Its pathway is glycan biosynthesis; glycogen metabolism. With respect to regulation, by phosphorylation of various serine residues and by calcium. In terms of biological role, phosphorylase b kinase catalyzes the phosphorylation of serine in certain substrates, including troponin I. The alpha chain may bind calmodulin. The polypeptide is Phosphorylase b kinase regulatory subunit alpha, skeletal muscle isoform (PHKA1) (Oryctolagus cuniculus (Rabbit)).